The primary structure comprises 557 residues: Enhancer of polycomb-like protein 1 (557 aa).

Disordered stretches follow at residues 323–349 (VKPA…RPQP) and 424–449 (QSHN…TYST). Over residues 327–337 (APVPTPAPPVK) the composition is skewed to pro residues. A compositionally biased stretch (low complexity) spans 429–441 (LSIPSSTPSTPLS).

The protein belongs to the enhancer of polycomb family. In terms of assembly, component of the NuA4 histone acetyltransferase complex.

It localises to the nucleus. Functionally, component of the NuA4 histone acetyltransferase complex which is involved in transcriptional activation of selected genes principally by acetylation of nucleosomal histone H4 and H2A. The NuA4 complex is also involved in DNA repair. Involved in gene silencing by neighboring heterochromatin, blockage of the silencing spreading along the chromosome, and required for cell cycle progression through G2/M. This chain is Enhancer of polycomb-like protein 1 (epl1), found in Schizosaccharomyces pombe (strain 972 / ATCC 24843) (Fission yeast).